We begin with the raw amino-acid sequence, 637 residues long: Mitochondrial Rho GTPase 1 (637 aa).

At 1–613 the chain is on the cytoplasmic side; the sequence is MSDGETLADV…LRRVFYLSDS (613 aa). Positions 7–184 constitute a Miro 1 domain; the sequence is LADVRIVLIG…FYYAQKAVIY (178 aa). Residues 28–35, 74–78, and 135–138 each bind GTP; these read SLLEDEWV, ISEMR, and LPSG. EF-hand domains follow at residues 200-235 and 320-355; these read RAKK…CFGI and EGVQ…CSAP. Positions 213, 215, 217, 219, 224, 333, 335, 337, 339, and 344 each coordinate Ca(2+). In terms of domain architecture, Miro 2 spans 436-601; the sequence is RKVFQCLVVG…FEQLAMMAVY (166 aa). Residues 445–452, 482–486, and 549–552 contribute to the GTP site; these read GAKDAGKT, KVKEE, and TKVE. A helical; Anchor for type IV membrane protein transmembrane segment spans residues 614–634; the sequence is NLLSKITFGAAIVALAGFLVL. At 635 to 637 the chain is on the mitochondrial intermembrane side; sequence KNL.

This sequence belongs to the mitochondrial Rho GTPase family.

It localises to the mitochondrion outer membrane. Functionally, mitochondrial GTPase involved in mitochondrial trafficking. Probably involved in control of anterograde transport of mitochondria and their subcellular distribution. This Caenorhabditis briggsae protein is Mitochondrial Rho GTPase 1.